A 259-amino-acid polypeptide reads, in one-letter code: Proteasome subunit alpha (259 aa).

The interval 222–259 (RITGPALEQLIPAEPAPASEPAPESKPDTETKPADPQD) is disordered. The segment covering 244-259 (PESKPDTETKPADPQD) has biased composition (basic and acidic residues).

This sequence belongs to the peptidase T1A family. As to quaternary structure, the 20S proteasome core is composed of 14 alpha and 14 beta subunits that assemble into four stacked heptameric rings, resulting in a barrel-shaped structure. The two inner rings, each composed of seven catalytic beta subunits, are sandwiched by two outer rings, each composed of seven alpha subunits. The catalytic chamber with the active sites is on the inside of the barrel. Has a gated structure, the ends of the cylinder being occluded by the N-termini of the alpha-subunits. Is capped by the proteasome-associated ATPase, ARC.

The protein resides in the cytoplasm. It functions in the pathway protein degradation; proteasomal Pup-dependent pathway. The formation of the proteasomal ATPase ARC-20S proteasome complex, likely via the docking of the C-termini of ARC into the intersubunit pockets in the alpha-rings, may trigger opening of the gate for substrate entry. Interconversion between the open-gate and close-gate conformations leads to a dynamic regulation of the 20S proteasome proteolysis activity. Its function is as follows. Component of the proteasome core, a large protease complex with broad specificity involved in protein degradation. This is Proteasome subunit alpha from Rhodococcus jostii (strain RHA1).